The primary structure comprises 159 residues: HSP70 co-chaperone SNL1 (159 aa).

The Perinuclear space segment spans residues 1–12; it reads MSHNAMEHWKSK. The helical; Signal-anchor for type II membrane protein transmembrane segment at 13–35 threads the bilayer; that stretch reads LSKTSTSTYVLLAVIAVVFLVTI. At 36–159 the chain is on the cytoplasmic side; sequence RRPNGSKGKS…AMLKSLDSLK (124 aa). The disordered stretch occupies residues 39-64; sequence NGSKGKSSKKRASKKNKKGKNQFEKA. The span at 44 to 58 shows a compositional bias: basic residues; it reads KSSKKRASKKNKKGK. The BAG domain occupies 73-159; sequence QIDNVSLRYG…AMLKSLDSLK (87 aa).

Interacts with the HSP70 family members SSA1, SSA4, and SSB1. These interactions are strongly reduced by ADP and ATP.

The protein localises to the endoplasmic reticulum membrane. It localises to the nucleus membrane. Functionally, stimulator of ATPase activity of molecular chaperones of the HSP70 family (principally of the SSA class). Stimulation is important for HSP70-substrate complex dissociation after folding of newly synthesized or refolded proteins. SNL1 is probably involved in nuclear pore biogenesis and in particular the folding or refolding of misfolded NUP116, GLE2 and NIC96. The chain is HSP70 co-chaperone SNL1 (SNL1) from Saccharomyces cerevisiae (strain ATCC 204508 / S288c) (Baker's yeast).